Reading from the N-terminus, the 409-residue chain is 23S rRNA (uracil(747)-C(5))-methyltransferase (409 aa).

Positions 61, 67, 70, and 137 each coordinate [4Fe-4S] cluster. Glutamine 251, tyrosine 277, glutamate 298, and aspartate 339 together coordinate S-adenosyl-L-methionine. Cysteine 365 functions as the Nucleophile in the catalytic mechanism.

Belongs to the class I-like SAM-binding methyltransferase superfamily. RNA M5U methyltransferase family.

The catalysed reaction is uridine(747) in 23S rRNA + S-adenosyl-L-methionine = 5-methyluridine(747) in 23S rRNA + S-adenosyl-L-homocysteine + H(+). Functionally, catalyzes the formation of 5-methyl-uridine at position equivalent to 747 (m5U747) in 23S rRNA. This is 23S rRNA (uracil(747)-C(5))-methyltransferase from Pyrococcus furiosus (strain ATCC 43587 / DSM 3638 / JCM 8422 / Vc1).